The following is an 87-amino-acid chain: Developmentally-regulated ectodermal protein (87 aa).

A signal peptide spans 1 to 16 (MKRLLVLTLVSAILMA).

This Tripneustes gratilla (Hawaian sea urchin) protein is Developmentally-regulated ectodermal protein.